Here is a 394-residue protein sequence, read N- to C-terminus: MIKIKRKTAPPPVEQDSDSDSSFDEEEPQDLEVQEGPVTDSSDEEAASSSKKTAKQGEASEDLKEEDDDDDEEENDDDDEEEDDDDDDDKKTRIPVLNPLSWMRNKEQRLALYKKMKKEKHKKKMQERRARRKAGVPANPGHTIESLREKDQTEVANLNDSDNEELQKELQLDDFSSYFERSYEPKVLITFADNPVTKTRKFGLELSRIFPNALVKIRNKSSVKKICKSAEREEFTDVVIVNEDRRKPNGLLVIHLPNGPTAHFKLSNVKLTSDIKRDHKEITKHRPEVILNNFTTRLGLTVGRMLGALFHHDPEFRGRRAVTFHNQRDYIFFRHHRYEFTKEGKRVKLRELGPRFTLKLRSLQEGTFDSKTGDYAWIISNKRHAMESRRRFFL.

2 disordered regions span residues 1–98 (MIKI…PVLN) and 116–152 (MKKE…EKDQ). Composition is skewed to acidic residues over residues 15–33 (QDSD…DLEV) and 59–88 (ASED…DDDD). The segment covering 116–134 (MKKEKHKKKMQERRARRKA) has biased composition (basic residues). A Brix domain is found at 185–369 (PKVLITFADN…LRSLQEGTFD (185 aa)). The interval 347–364 (VKLRELGPRFTLKLRSLQ) is RNA-binding.

The protein resides in the nucleus. The protein localises to the nucleolus. In terms of biological role, may be required for ribosome biogenesis. The sequence is that of Probable ribosome production factor 1 from Drosophila melanogaster (Fruit fly).